The primary structure comprises 509 residues: Maturase K (509 aa).

Belongs to the intron maturase 2 family. MatK subfamily.

It localises to the plastid. The protein resides in the chloroplast. Usually encoded in the trnK tRNA gene intron. Probably assists in splicing its own and other chloroplast group II introns. In Clematis florida (Asian virgin's bower), this protein is Maturase K.